Consider the following 593-residue polypeptide: Probable serine/threonine-protein kinase samkB (593 aa).

Positions W29 to N93 constitute an SAM domain. Positions E108–T157 are disordered. The segment covering N113 to N153 has biased composition (low complexity). The Protein kinase domain maps to Y186–F438. Residues I192–V200 and K216 contribute to the ATP site. The active-site Proton acceptor is the D313.

It belongs to the protein kinase superfamily. Ser/Thr protein kinase family.

The catalysed reaction is L-seryl-[protein] + ATP = O-phospho-L-seryl-[protein] + ADP + H(+). It catalyses the reaction L-threonyl-[protein] + ATP = O-phospho-L-threonyl-[protein] + ADP + H(+). This chain is Probable serine/threonine-protein kinase samkB (samkB), found in Dictyostelium discoideum (Social amoeba).